The primary structure comprises 255 residues: uncharacterized protein (255 aa).

An N-terminal signal peptide occupies residues 1 to 22 (MNILSPIIIIIILIVLFYVMRM).

This is an uncharacterized protein from Acanthamoeba polyphaga (Amoeba).